The chain runs to 392 residues: Phosphoglycerate kinase (392 aa).

Substrate-binding positions include 21 to 23 (DLN), Arg-36, 59 to 62 (HLGR), Arg-113, and Arg-146. Residues Lys-197, Glu-319, and 345-348 (GGDT) contribute to the ATP site.

The protein belongs to the phosphoglycerate kinase family. In terms of assembly, monomer.

The protein localises to the cytoplasm. It carries out the reaction (2R)-3-phosphoglycerate + ATP = (2R)-3-phospho-glyceroyl phosphate + ADP. It participates in carbohydrate degradation; glycolysis; pyruvate from D-glyceraldehyde 3-phosphate: step 2/5. This is Phosphoglycerate kinase from Alkalilimnicola ehrlichii (strain ATCC BAA-1101 / DSM 17681 / MLHE-1).